A 162-amino-acid chain; its full sequence is Mediator of RNA polymerase II transcription subunit 31 (162 aa).

The disordered stretch occupies residues 131–162 (VQGGQNVEAGDTGHNEGDQGTQQDKENIALKT). Positions 141 to 162 (DTGHNEGDQGTQQDKENIALKT) are enriched in basic and acidic residues.

Belongs to the Mediator complex subunit 31 family. In terms of assembly, component of the Mediator complex.

It localises to the nucleus. Component of the Mediator complex, a coactivator involved in the regulated transcription of nearly all RNA polymerase II-dependent genes. Mediator functions as a bridge to convey information from gene-specific regulatory proteins to the basal RNA polymerase II transcription machinery. Mediator is recruited to promoters by direct interactions with regulatory proteins and serves as a scaffold for the assembly of a functional preinitiation complex with RNA polymerase II and the general transcription factors. This Aspergillus fumigatus (strain ATCC MYA-4609 / CBS 101355 / FGSC A1100 / Af293) (Neosartorya fumigata) protein is Mediator of RNA polymerase II transcription subunit 31 (soh1).